Here is a 37-residue protein sequence, read N- to C-terminus: Large ribosomal subunit protein bL36c (37 aa).

It belongs to the bacterial ribosomal protein bL36 family.

It localises to the plastid. It is found in the chloroplast. This Cryptomeria japonica (Japanese cedar) protein is Large ribosomal subunit protein bL36c.